Reading from the N-terminus, the 239-residue chain is Uracil-DNA glycosylase (239 aa).

The Proton acceptor role is filled by Asp65.

Belongs to the uracil-DNA glycosylase (UDG) superfamily. UNG family.

The protein resides in the cytoplasm. It carries out the reaction Hydrolyzes single-stranded DNA or mismatched double-stranded DNA and polynucleotides, releasing free uracil.. Its function is as follows. Excises uracil residues from the DNA which can arise as a result of misincorporation of dUMP residues by DNA polymerase or due to deamination of cytosine. In Levilactobacillus brevis (strain ATCC 367 / BCRC 12310 / CIP 105137 / JCM 1170 / LMG 11437 / NCIMB 947 / NCTC 947) (Lactobacillus brevis), this protein is Uracil-DNA glycosylase.